Here is a 940-residue protein sequence, read N- to C-terminus: Gamma-aminobutyric acid type B receptor subunit 2 (940 aa).

Residues 1-40 (MASPPSSGQPRPPPPPPPPARLLLPLLLSLLLSLAPGAWG) form the signal peptide. The Extracellular portion of the chain corresponds to 41–482 (WARGAPRPPP…LRKISLPLYS (442 aa)). N-linked (GlcNAc...) asparagine glycosylation occurs at N89. Disulfide bonds link C107/C134, C236/C265, and C264/C301. N-linked (GlcNAc...) asparagine glycans are attached at residues N297, N388, N403, and N452. Residues 483-503 (ILSALTILGMIMASAFLFFNI) form a helical membrane-spanning segment. Topologically, residues 504-521 (KNRNQKLIKMSSPYMNNL) are cytoplasmic. A helical transmembrane segment spans residues 522-542 (IILGGMLSYASIFLFGLDGSF). Residues 543–550 (VSEKTFET) are Extracellular-facing. A helical transmembrane segment spans residues 551–571 (LCTVRTWILTVGYTTAFGAMF). Residues 572-596 (AKTWRVHAIFKNVKMKKKIIKDQKL) are Cytoplasmic-facing. The helical transmembrane segment at 597-617 (LVIVGGMLLIDLCILICWQAV) threads the bilayer. Topologically, residues 618–653 (DPLRRTVERYSMEPDPAGRDISIRPLLEHCENTHMT) are extracellular. A helical transmembrane segment spans residues 654–674 (IWLGIVYAYKGLLMLFGCFLA). The Cytoplasmic portion of the chain corresponds to 675-690 (WETRNVSIPALNDSKY). A helical membrane pass occupies residues 691 to 711 (IGMSVYNVGIMCIIGAAVSFL). Over 712–719 (TRDQPNVQ) the chain is Extracellular. The chain crosses the membrane as a helical span at residues 720 to 740 (FCIVALVIIFCSTITLCLVFV). Over 741–940 (PKLITLRTNP…PSFRVMVSGL (200 aa)) the chain is Cytoplasmic. A disordered region spans residues 762–789 (TQNQKKEDSKTSTSVTSVNQASTSRLEG). Over residues 772 to 786 (TSTSVTSVNQASTSR) the composition is skewed to polar residues. A phosphoserine mark is found at S775 and S778. Residues 781–818 (QASTSRLEGLQSENHRLRMKITELDKDLEEVTMQLQDT) are a coiled coil. T818 is modified (phosphothreonine). S883, S892, S912, S915, S919, and S923 each carry phosphoserine.

It belongs to the G-protein coupled receptor 3 family. GABA-B receptor subfamily. Heterodimer of GABBR1 and GABBR2. Homodimers may form, but are inactive. Interacts (via C-terminus) with ATF4 (via leucine zipper domain).

It localises to the cell membrane. Its subcellular location is the postsynaptic cell membrane. Component of a heterodimeric G-protein coupled receptor for GABA, formed by GABBR1 and GABBR2. Within the heterodimeric GABA receptor, only GABBR1 seems to bind agonists, while GABBR2 mediates coupling to G proteins. Ligand binding causes a conformation change that triggers signaling via guanine nucleotide-binding proteins (G proteins) and modulates the activity of down-stream effectors, such as adenylate cyclase. Signaling inhibits adenylate cyclase, stimulates phospholipase A2, activates potassium channels, inactivates voltage-dependent calcium-channels and modulates inositol phospholipid hydrolysis. Plays a critical role in the fine-tuning of inhibitory synaptic transmission. Pre-synaptic GABA receptor inhibits neurotransmitter release by down-regulating high-voltage activated calcium channels, whereas postsynaptic GABA receptor decreases neuronal excitability by activating a prominent inwardly rectifying potassium (Kir) conductance that underlies the late inhibitory postsynaptic potentials. Not only implicated in synaptic inhibition but also in hippocampal long-term potentiation, slow wave sleep, muscle relaxation and antinociception. Interacts with KCTD8, KCTD12 and KCTD16; this interaction determines the pharmacology and kinetics of the receptor response, the KCTD proteins markedly accelerating the GABA-B response, although to different extents. The polypeptide is Gamma-aminobutyric acid type B receptor subunit 2 (Gabbr2) (Mus musculus (Mouse)).